Consider the following 116-residue polypeptide: Large ribosomal subunit protein uL18 (116 aa).

The protein belongs to the universal ribosomal protein uL18 family. Part of the 50S ribosomal subunit; part of the 5S rRNA/L5/L18/L25 subcomplex. Contacts the 5S and 23S rRNAs.

This is one of the proteins that bind and probably mediate the attachment of the 5S RNA into the large ribosomal subunit, where it forms part of the central protuberance. The polypeptide is Large ribosomal subunit protein uL18 (Shewanella sediminis (strain HAW-EB3)).